A 365-amino-acid polypeptide reads, in one-letter code: Glycerol dehydrogenase (365 aa).

Aspartate 37, glycine 94, lysine 95, threonine 116, and serine 119 together coordinate NAD(+). Position 121 (aspartate 121) interacts with glycerol. Residues serine 125, leucine 127, and tyrosine 131 each coordinate NAD(+). Positions 171, 254, and 271 each coordinate Zn(2+). Histidine 254 is a binding site for glycerol.

This sequence belongs to the iron-containing alcohol dehydrogenase family. Requires Zn(2+) as cofactor.

It carries out the reaction glycerol + NAD(+) = dihydroxyacetone + NADH + H(+). It participates in polyol metabolism; glycerol fermentation; glycerone phosphate from glycerol (oxidative route): step 1/2. Functionally, catalyzes the NAD-dependent oxidation of glycerol to dihydroxyacetone (glycerone). Allows microorganisms to utilize glycerol as a source of carbon under anaerobic conditions. This chain is Glycerol dehydrogenase (gldA), found in Pseudomonas putida (Arthrobacter siderocapsulatus).